The following is a 340-amino-acid chain: 4-amino-5-hydroxymethyl-2-methylpyrimidine phosphate synthase THI11 (340 aa).

Residue Lys62 is modified to N6-(pyridoxal phosphate)lysine. The active site involves His66. Position 115–118 (115–118 (GEFG)) interacts with pyridoxal 5'-phosphate. The short motif at 195 to 199 (CCCFC) is the CCCFC; essential for catalytic activity, may be the site of iron coordination element.

The protein belongs to the NMT1/THI5 family. Homodimer. Fe cation is required as a cofactor.

It catalyses the reaction N(6)-(pyridoxal phosphate)-L-lysyl-[4-amino-5-hydroxymethyl-2-methylpyrimidine phosphate synthase] + L-histidyl-[4-amino-5-hydroxymethyl-2-methylpyrimidine phosphate synthase] + 2 Fe(3+) + 4 H2O = L-lysyl-[4-amino-5-hydroxymethyl-2-methylpyrimidine phosphate synthase] + (2S)-2-amino-5-hydroxy-4-oxopentanoyl-[4-amino-5-hydroxymethyl-2-methylpyrimidine phosphate synthase] + 4-amino-2-methyl-5-(phosphooxymethyl)pyrimidine + 3-oxopropanoate + 2 Fe(2+) + 2 H(+). Its pathway is cofactor biosynthesis; thiamine diphosphate biosynthesis. Its function is as follows. Responsible for the formation of the pyrimidine heterocycle in the thiamine biosynthesis pathway. Catalyzes the formation of hydroxymethylpyrimidine phosphate (HMP-P) from histidine and pyridoxal phosphate (PLP). The protein uses PLP and the active site histidine to form HMP-P, generating an inactive enzyme. The enzyme can only undergo a single turnover, which suggests it is a suicide enzyme. The sequence is that of 4-amino-5-hydroxymethyl-2-methylpyrimidine phosphate synthase THI11 from Saccharomyces cerevisiae (strain ATCC 204508 / S288c) (Baker's yeast).